Reading from the N-terminus, the 303-residue chain is Oxygen-dependent coproporphyrinogen-III oxidase (303 aa).

S94 is a substrate binding site. Residues H98 and H108 each contribute to the a divalent metal cation site. H108 serves as the catalytic Proton donor. 110 to 112 (NVR) is a binding site for substrate. Positions 147 and 177 each coordinate a divalent metal cation. Positions 242-277 (YVEFNLVYDRGTLFGLQTGGRTESILMSLPPLVRWE) are important for dimerization. 260 to 262 (GGR) contacts substrate.

It belongs to the aerobic coproporphyrinogen-III oxidase family. Homodimer. A divalent metal cation is required as a cofactor.

Its subcellular location is the cytoplasm. It carries out the reaction coproporphyrinogen III + O2 + 2 H(+) = protoporphyrinogen IX + 2 CO2 + 2 H2O. Its pathway is porphyrin-containing compound metabolism; protoporphyrin-IX biosynthesis; protoporphyrinogen-IX from coproporphyrinogen-III (O2 route): step 1/1. Its function is as follows. Involved in the heme biosynthesis. Catalyzes the aerobic oxidative decarboxylation of propionate groups of rings A and B of coproporphyrinogen-III to yield the vinyl groups in protoporphyrinogen-IX. In Saccharophagus degradans (strain 2-40 / ATCC 43961 / DSM 17024), this protein is Oxygen-dependent coproporphyrinogen-III oxidase.